The following is a 296-amino-acid chain: Ribosomal RNA small subunit methyltransferase H (296 aa).

Residues 38-40 (GVH), glutamate 57, phenylalanine 80, aspartate 103, and histidine 110 contribute to the S-adenosyl-L-methionine site.

The protein belongs to the methyltransferase superfamily. RsmH family.

Its subcellular location is the cytoplasm. The enzyme catalyses cytidine(1402) in 16S rRNA + S-adenosyl-L-methionine = N(4)-methylcytidine(1402) in 16S rRNA + S-adenosyl-L-homocysteine + H(+). In terms of biological role, specifically methylates the N4 position of cytidine in position 1402 (C1402) of 16S rRNA. The protein is Ribosomal RNA small subunit methyltransferase H of Borreliella burgdorferi (strain ATCC 35210 / DSM 4680 / CIP 102532 / B31) (Borrelia burgdorferi).